Reading from the N-terminus, the 138-residue chain is Basic phospholipase A2 homolog Ts-K49b (138 aa).

Residues 1–16 (MRTLWIMAVLLVGVEG) form the signal peptide. Intrachain disulfides connect Cys42–Cys131, Cys44–Cys60, Cys65–Cys138, Cys66–Cys104, Cys73–Cys97, and Cys91–Cys102. An important for membrane-damaging activities in eukaryotes and bacteria; heparin-binding region spans residues 121–133 (KKKKINLKLFCKK).

Expressed by the venom gland.

Its subcellular location is the secreted. In terms of biological role, snake venom phospholipase A2 homolog that lacks catalytic activity. It shows myotoxic and weak anticoagulant activities. A model of myotoxic mechanism has been proposed: an apo Lys49-PLA2 is activated by the entrance of a hydrophobic molecule (e.g. fatty acid) at the hydrophobic channel of the protein leading to a reorientation of a monomer. This reorientation causes a transition between 'inactive' to 'active' states, causing alignment of C-terminal and membrane-docking sites (MDoS) side-by-side and putting the membrane-disruption sites (MDiS) in the same plane, exposed to solvent and in a symmetric position for both monomers. The MDoS region stabilizes the toxin on membrane by the interaction of charged residues with phospholipid head groups. Subsequently, the MDiS region destabilizes the membrane with penetration of hydrophobic residues. This insertion causes a disorganization of the membrane, allowing an uncontrolled influx of ions (i.e. calcium and sodium), and eventually triggering irreversible intracellular alterations and cell death. The polypeptide is Basic phospholipase A2 homolog Ts-K49b (Trimeresurus stejnegeri (Chinese green tree viper)).